Reading from the N-terminus, the 228-residue chain is uncharacterized protein (228 aa).

The signal sequence occupies residues 1-15; the sequence is MKQKYLFIASMALAG. The N-palmitoyl cysteine moiety is linked to residue Cys16. Residue Cys16 is the site of S-diacylglycerol cysteine attachment.

It to P.multocida PM0015.

It is found in the cell membrane. This is an uncharacterized protein from Pasteurella multocida (strain Pm70).